Here is a 92-residue protein sequence, read N- to C-terminus: Probable Fe(2+)-trafficking protein (92 aa).

Belongs to the Fe(2+)-trafficking protein family.

Functionally, could be a mediator in iron transactions between iron acquisition and iron-requiring processes, such as synthesis and/or repair of Fe-S clusters in biosynthetic enzymes. The polypeptide is Probable Fe(2+)-trafficking protein (Shewanella sp. (strain ANA-3)).